The following is a 383-amino-acid chain: tRNA-specific 2-thiouridylase MnmA (383 aa).

Residues 9–16 and M35 contribute to the ATP site; that span reads GMSGGVDS. Positions 95 to 97 are interaction with target base in tRNA; sequence NPD. The active-site Nucleophile is the C100. Cysteines 100 and 196 form a disulfide. G124 lines the ATP pocket. Residues 146–148 form an interaction with tRNA region; it reads KDQ. The Cysteine persulfide intermediate role is filled by C196. Positions 308–309 are interaction with tRNA; sequence RY.

It belongs to the MnmA/TRMU family.

Its subcellular location is the cytoplasm. It carries out the reaction S-sulfanyl-L-cysteinyl-[protein] + uridine(34) in tRNA + AH2 + ATP = 2-thiouridine(34) in tRNA + L-cysteinyl-[protein] + A + AMP + diphosphate + H(+). Catalyzes the 2-thiolation of uridine at the wobble position (U34) of tRNA, leading to the formation of s(2)U34. The protein is tRNA-specific 2-thiouridylase MnmA of Burkholderia mallei (strain NCTC 10247).